We begin with the raw amino-acid sequence, 255 residues long: 5'-nucleotidase SurE (255 aa).

4 residues coordinate a divalent metal cation: Asp8, Asp9, Ser39, and Asn91.

It belongs to the SurE nucleotidase family. A divalent metal cation serves as cofactor.

Its subcellular location is the cytoplasm. It catalyses the reaction a ribonucleoside 5'-phosphate + H2O = a ribonucleoside + phosphate. Functionally, nucleotidase that shows phosphatase activity on nucleoside 5'-monophosphates. The sequence is that of 5'-nucleotidase SurE from Acinetobacter baumannii (strain AB0057).